The chain runs to 163 residues: Cyanate hydratase (163 aa).

Active-site residues include R103, E106, and S129.

Belongs to the cyanase family.

The catalysed reaction is cyanate + hydrogencarbonate + 3 H(+) = NH4(+) + 2 CO2. Catalyzes the reaction of cyanate with bicarbonate to produce ammonia and carbon dioxide. This chain is Cyanate hydratase, found in Ajellomyces dermatitidis (strain ER-3 / ATCC MYA-2586) (Blastomyces dermatitidis).